The primary structure comprises 519 residues: uncharacterized protein (519 aa).

13 consecutive transmembrane segments (helical) span residues phenylalanine 19–threonine 39, valine 42–isoleucine 62, methionine 87–glycine 107, leucine 128–valine 148, valine 179–alanine 199, phenylalanine 220–alanine 240, leucine 270–alanine 290, valine 311–isoleucine 331, tryptophan 345–isoleucine 365, isoleucine 386–threonine 406, phenylalanine 413–leucine 433, leucine 475–threonine 495, and tyrosine 496–valine 516.

Its subcellular location is the cell membrane. This is an uncharacterized protein from Haemophilus influenzae (strain ATCC 51907 / DSM 11121 / KW20 / Rd).